Here is a 213-residue protein sequence, read N- to C-terminus: Calcium-dependent cell adhesion molecule 1 (213 aa).

4 tandem repeats follow at residues 1–48, 49–97, 98–146, and 147–194. Residues 1 to 194 are 4 X approximate tandem repeats; that stretch reads MSVDANKVKF…IKKDETFPKN (194 aa).

The protein belongs to the Dictyostelium CAD family. The N-terminus is blocked.

It is found in the cell membrane. Mediates calcium-dependent cell-cell adhesion during the early stage of development. This chain is Calcium-dependent cell adhesion molecule 1 (cadA), found in Dictyostelium discoideum (Social amoeba).